The sequence spans 72 residues: Putative membrane protein insertion efficiency factor (72 aa).

It belongs to the UPF0161 family.

The protein localises to the cell inner membrane. Its function is as follows. Could be involved in insertion of integral membrane proteins into the membrane. This chain is Putative membrane protein insertion efficiency factor, found in Amoebophilus asiaticus (strain 5a2).